Reading from the N-terminus, the 201-residue chain is Phosphoheptose isomerase (201 aa).

An SIS domain is found at 36–195 (IAKSLNEGGK…EDILFEIPAA (160 aa)). Substrate is bound at residue 51–53 (NGG). 2 residues coordinate Zn(2+): histidine 60 and glutamate 64. Residues glutamate 64, 93 to 94 (ND), 119 to 121 (STS), serine 124, and glutamine 171 contribute to the substrate site. Positions 171 and 179 each coordinate Zn(2+).

Belongs to the SIS family. GmhA subfamily. Zn(2+) is required as a cofactor.

Its subcellular location is the cytoplasm. It carries out the reaction 2 D-sedoheptulose 7-phosphate = D-glycero-alpha-D-manno-heptose 7-phosphate + D-glycero-beta-D-manno-heptose 7-phosphate. Its pathway is carbohydrate biosynthesis; D-glycero-D-manno-heptose 7-phosphate biosynthesis; D-glycero-alpha-D-manno-heptose 7-phosphate and D-glycero-beta-D-manno-heptose 7-phosphate from sedoheptulose 7-phosphate: step 1/1. Its function is as follows. Catalyzes the isomerization of sedoheptulose 7-phosphate in D-glycero-D-manno-heptose 7-phosphate. This Thermodesulfovibrio yellowstonii (strain ATCC 51303 / DSM 11347 / YP87) protein is Phosphoheptose isomerase.